A 183-amino-acid chain; its full sequence is Auxin-responsive protein IAA20 (183 aa).

2 disordered regions span residues 1 to 23 (MELELGLRLALPSPSPSPATATA) and 42 to 77 (GFEEALGGFKTDDDNDDGNGRGGDGDSDGEMGNKRR). The EAR-like (transcriptional repression) signature appears at 3–7 (LELGL). The PB1 domain occupies 98–183 (GGYVKVKMEG…KSVKRLKILV (86 aa)).

It belongs to the Aux/IAA family. As to quaternary structure, homodimers and heterodimers. In terms of tissue distribution, expressed at very low levels in etiolated seedlings and flowers.

The protein resides in the nucleus. Aux/IAA proteins are short-lived transcriptional factors that function as repressors of early auxin response genes at low auxin concentrations. This chain is Auxin-responsive protein IAA20 (IAA20), found in Oryza sativa subsp. japonica (Rice).